The chain runs to 193 residues: ATP-dependent Clp protease proteolytic subunit (193 aa).

The active-site Nucleophile is S98. The active site involves H123.

Belongs to the peptidase S14 family. Fourteen ClpP subunits assemble into 2 heptameric rings which stack back to back to give a disk-like structure with a central cavity, resembling the structure of eukaryotic proteasomes.

It localises to the cytoplasm. It catalyses the reaction Hydrolysis of proteins to small peptides in the presence of ATP and magnesium. alpha-casein is the usual test substrate. In the absence of ATP, only oligopeptides shorter than five residues are hydrolyzed (such as succinyl-Leu-Tyr-|-NHMec, and Leu-Tyr-Leu-|-Tyr-Trp, in which cleavage of the -Tyr-|-Leu- and -Tyr-|-Trp bonds also occurs).. In terms of biological role, cleaves peptides in various proteins in a process that requires ATP hydrolysis. Has a chymotrypsin-like activity. Plays a major role in the degradation of misfolded proteins. This chain is ATP-dependent Clp protease proteolytic subunit, found in Histophilus somni (strain 2336) (Haemophilus somnus).